A 91-amino-acid chain; its full sequence is Small ribosomal subunit protein uS19 (91 aa).

The protein belongs to the universal ribosomal protein uS19 family.

In terms of biological role, protein S19 forms a complex with S13 that binds strongly to the 16S ribosomal RNA. The protein is Small ribosomal subunit protein uS19 of Bordetella pertussis (strain Tohama I / ATCC BAA-589 / NCTC 13251).